Here is a 735-residue protein sequence, read N- to C-terminus: Disintegrin and metalloproteinase domain-containing protein 2 (735 aa).

The N-terminal stretch at Met-1–Met-16 is a signal peptide. Residues Asp-17–Lys-174 constitute a propeptide that is removed on maturation. Over Asp-17–Arg-686 the chain is Extracellular. Asn-76, Asn-122, and Asn-220 each carry an N-linked (GlcNAc...) asparagine glycan. Positions Lys-178–Pro-375 constitute a Peptidase M12B domain. Intrachain disulfides connect Cys-287-Cys-370, Cys-329-Cys-354, Cys-331-Cys-336, and Cys-445-Cys-465. N-linked (GlcNAc...) asparagine glycans are attached at residues Asn-353, Asn-459, and Asn-566. Residues Gln-384 to Thr-473 enclose the Disintegrin domain. The 34-residue stretch at Leu-612–Ser-645 folds into the EGF-like domain. 3 disulfide bridges follow: Cys-616–Cys-627, Cys-621–Cys-633, and Cys-635–Cys-644. The helical transmembrane segment at Trp-687 to Val-707 threads the bilayer. Topologically, residues Lys-708–Gly-735 are cytoplasmic. A Phosphoserine modification is found at Ser-729.

As to quaternary structure, heterodimer with ADAM1/fertilin subunit alpha. Post-translationally, the signal and the metalloprotease domain are cleaved during the epididymal maturation of the spermatozoa. As to expression, expressed specifically in testis.

The protein resides in the membrane. Functionally, sperm surface membrane protein that may be involved in sperm-egg plasma membrane adhesion and fusion during fertilization. Could have a direct role in sperm-zona binding or migration of sperm from the uterus into the oviduct. Interactions with egg membrane could be mediated via binding between its disintegrin-like domain to one or more integrins receptors on the egg. This is a non catalytic metalloprotease-like protein. This is Disintegrin and metalloproteinase domain-containing protein 2 (ADAM2) from Macaca fascicularis (Crab-eating macaque).